Reading from the N-terminus, the 496-residue chain is Glycerol kinase (496 aa).

Residue Thr-12 coordinates ADP. The ATP site is built by Thr-12, Thr-13, and Ser-14. Residue Thr-12 participates in sn-glycerol 3-phosphate binding. Residue Arg-16 participates in ADP binding. 3 residues coordinate sn-glycerol 3-phosphate: Arg-82, Glu-83, and Tyr-134. The glycerol site is built by Arg-82, Glu-83, and Tyr-134. His-230 carries the post-translational modification Phosphohistidine; by HPr. Residue Asp-244 coordinates sn-glycerol 3-phosphate. Residues Asp-244 and Gln-245 each contribute to the glycerol site. ADP-binding residues include Thr-266 and Gly-309. ATP contacts are provided by Thr-266, Gly-309, Gln-313, and Gly-410. Residues Gly-410 and Asn-414 each contribute to the ADP site.

This sequence belongs to the FGGY kinase family. In terms of assembly, homotetramer and homodimer (in equilibrium). The phosphoenolpyruvate-dependent sugar phosphotransferase system (PTS), including enzyme I, and histidine-containing protein (HPr) are required for the phosphorylation, which leads to the activation of the enzyme.

It catalyses the reaction glycerol + ATP = sn-glycerol 3-phosphate + ADP + H(+). The protein operates within polyol metabolism; glycerol degradation via glycerol kinase pathway; sn-glycerol 3-phosphate from glycerol: step 1/1. With respect to regulation, activated by phosphorylation and inhibited by fructose 1,6-bisphosphate (FBP). Its function is as follows. Key enzyme in the regulation of glycerol uptake and metabolism. Catalyzes the phosphorylation of glycerol to yield sn-glycerol 3-phosphate. In Bacillus subtilis (strain 168), this protein is Glycerol kinase.